The primary structure comprises 453 residues: Tubulin alpha-1 chain (453 aa).

GTP contacts are provided by Gln-11, Glu-71, Gly-144, Thr-145, Thr-179, Asn-206, and Asn-228. Glu-71 serves as a coordination point for Mg(2+). Residue Glu-254 is part of the active site. The disordered stretch occupies residues 433–453; sequence EEVGAETADGDGEEEEFGEEY.

Belongs to the tubulin family. Dimer of alpha and beta chains. A typical microtubule is a hollow water-filled tube with an outer diameter of 25 nm and an inner diameter of 15 nM. Alpha-beta heterodimers associate head-to-tail to form protofilaments running lengthwise along the microtubule wall with the beta-tubulin subunit facing the microtubule plus end conferring a structural polarity. Microtubules usually have 13 protofilaments but different protofilament numbers can be found in some organisms and specialized cells. Requires Mg(2+) as cofactor. In terms of processing, undergoes a tyrosination/detyrosination cycle, the cyclic removal and re-addition of a C-terminal tyrosine residue by the enzymes tubulin tyrosine carboxypeptidase (TTCP) and tubulin tyrosine ligase (TTL), respectively.

It localises to the cytoplasm. The protein localises to the cytoskeleton. The enzyme catalyses GTP + H2O = GDP + phosphate + H(+). Its function is as follows. Tubulin is the major constituent of microtubules, a cylinder consisting of laterally associated linear protofilaments composed of alpha- and beta-tubulin heterodimers. Microtubules grow by the addition of GTP-tubulin dimers to the microtubule end, where a stabilizing cap forms. Below the cap, tubulin dimers are in GDP-bound state, owing to GTPase activity of alpha-tubulin. The chain is Tubulin alpha-1 chain (TUBA1) from Pelvetia fastigiata (Brown alga).